We begin with the raw amino-acid sequence, 648 residues long: Biosynthetic arginine decarboxylase (648 aa).

Lys-109 carries the post-translational modification N6-(pyridoxal phosphate)lysine. 291–301 is a substrate binding site; sequence IDVGGGLGIDF.

It belongs to the Orn/Lys/Arg decarboxylase class-II family. SpeA subfamily. It depends on Mg(2+) as a cofactor. Pyridoxal 5'-phosphate serves as cofactor.

The enzyme catalyses L-arginine + H(+) = agmatine + CO2. Its pathway is amine and polyamine biosynthesis; agmatine biosynthesis; agmatine from L-arginine: step 1/1. In terms of biological role, catalyzes the biosynthesis of agmatine from arginine. The chain is Biosynthetic arginine decarboxylase from Prochlorococcus marinus (strain AS9601).